The primary structure comprises 241 residues: 1-(5-phosphoribosyl)-5-[(5-phosphoribosylamino)methylideneamino] imidazole-4-carboxamide isomerase (241 aa).

Asp8 acts as the Proton acceptor in catalysis. Catalysis depends on Asp130, which acts as the Proton donor.

Belongs to the HisA/HisF family.

The protein resides in the cytoplasm. It catalyses the reaction 1-(5-phospho-beta-D-ribosyl)-5-[(5-phospho-beta-D-ribosylamino)methylideneamino]imidazole-4-carboxamide = 5-[(5-phospho-1-deoxy-D-ribulos-1-ylimino)methylamino]-1-(5-phospho-beta-D-ribosyl)imidazole-4-carboxamide. It functions in the pathway amino-acid biosynthesis; L-histidine biosynthesis; L-histidine from 5-phospho-alpha-D-ribose 1-diphosphate: step 4/9. This is 1-(5-phosphoribosyl)-5-[(5-phosphoribosylamino)methylideneamino] imidazole-4-carboxamide isomerase from Leptospira interrogans serogroup Icterohaemorrhagiae serovar copenhageni (strain Fiocruz L1-130).